A 370-amino-acid polypeptide reads, in one-letter code: Glutamate 5-kinase (370 aa).

Position 13 (K13) interacts with ATP. Substrate-binding residues include S52, D139, and N151. ATP contacts are provided by residues S171–D172 and S211–K217. Residues K275–R353 enclose the PUA domain.

It belongs to the glutamate 5-kinase family.

It localises to the cytoplasm. It catalyses the reaction L-glutamate + ATP = L-glutamyl 5-phosphate + ADP. The protein operates within amino-acid biosynthesis; L-proline biosynthesis; L-glutamate 5-semialdehyde from L-glutamate: step 1/2. Catalyzes the transfer of a phosphate group to glutamate to form L-glutamate 5-phosphate. This chain is Glutamate 5-kinase, found in Thermus thermophilus (strain ATCC BAA-163 / DSM 7039 / HB27).